The chain runs to 198 residues: UPF0314 protein Saro_1818 (198 aa).

5 helical membrane passes run Gly-13–Gly-33, Trp-62–Trp-82, Leu-96–Ile-116, Ala-153–Ile-173, and Leu-177–Gly-197.

This sequence belongs to the UPF0314 family.

Its subcellular location is the cell membrane. This Novosphingobium aromaticivorans (strain ATCC 700278 / DSM 12444 / CCUG 56034 / CIP 105152 / NBRC 16084 / F199) protein is UPF0314 protein Saro_1818.